Consider the following 114-residue polypeptide: Small ribosomal subunit protein uS17 (114 aa).

This sequence belongs to the universal ribosomal protein uS17 family. As to quaternary structure, part of the 30S ribosomal subunit.

Functionally, one of the primary rRNA binding proteins, it binds specifically to the 5'-end of 16S ribosomal RNA. In Sulfolobus acidocaldarius (strain ATCC 33909 / DSM 639 / JCM 8929 / NBRC 15157 / NCIMB 11770), this protein is Small ribosomal subunit protein uS17.